Consider the following 513-residue polypeptide: Lysine--tRNA ligase (513 aa).

The Mg(2+) site is built by glutamate 423 and glutamate 430.

Belongs to the class-II aminoacyl-tRNA synthetase family. As to quaternary structure, homodimer. Mg(2+) is required as a cofactor.

The protein resides in the cytoplasm. The enzyme catalyses tRNA(Lys) + L-lysine + ATP = L-lysyl-tRNA(Lys) + AMP + diphosphate. This Anaeromyxobacter dehalogenans (strain 2CP-1 / ATCC BAA-258) protein is Lysine--tRNA ligase.